A 395-amino-acid polypeptide reads, in one-letter code: Protein phosphatase PP2A regulatory subunit A (395 aa).

HEAT repeat units lie at residues 44-81 (DCLA…AVGP), 83-120 (STKT…ILSP), 122-159 (LAIQ…VLGK), 161-198 (ATIE…VIGI), 200-237 (LLSQ…QLGV), 239-276 (FFDD…EEFG), 279-316 (WAMQ…VLGS), and 318-355 (ITST…IVDE).

This sequence belongs to the phosphatase 2A regulatory subunit A family. PP2A exists in several trimeric forms, all of which consist of a core composed of a catalytic subunit associated with a 65 kDa regulatory subunit (PR65) (subunit A). The core complex associates with a third, variable subunit (subunit B), which confers distinct properties to the holoenzyme.

In terms of biological role, the PR65 subunit of protein phosphatase 2A serves as a scaffolding molecule to coordinate the assembly of the catalytic subunit and a variable regulatory B subunit. The polypeptide is Protein phosphatase PP2A regulatory subunit A (Pisum sativum (Garden pea)).